The primary structure comprises 870 residues: A-kinase anchor protein 2 (870 aa).

Disordered stretches follow at residues 14-43 (PGITSTPHSKDHSSPFYSPSHNGLLTDHHE) and 103-165 (IEKA…SSRD). Ser122 bears the Phosphoserine mark. Over residues 133–151 (GHSTDQPQDMLGNSLQAPA) the composition is skewed to polar residues. Ser152 bears the Phosphoserine mark. Over residues 152 to 161 (SPSSSTSSHC) the composition is skewed to low complexity. Lys174 is covalently cross-linked (Glycyl lysine isopeptide (Lys-Gly) (interchain with G-Cter in SUMO1); alternate). A Glycyl lysine isopeptide (Lys-Gly) (interchain with G-Cter in SUMO2); alternate cross-link involves residue Lys174. The stretch at 213–307 (EEMIELEKER…QQQQLSTSQL (95 aa)) forms a coiled coil. Residues 233–324 (KNPGIAAKWW…EHLDSIEHTK (92 aa)) form a disordered region. Residues 259–274 (LESHRKYKERKEKRAQ) show a composition bias toward basic and acidic residues. The span at 275–302 (QEQLQLQQQQQQQLQQLQQLQQQQQQQL) shows a compositional bias: low complexity. Residues 313 to 324 (AHEHLDSIEHTK) show a composition bias toward basic and acidic residues. Ser347 is modified (phosphoserine). A disordered region spans residues 409–436 (ESQSAGAGTGNAATQGKEGPYSEPSKRG). Residues 410–424 (SQSAGAGTGNAATQG) are compositionally biased toward low complexity. Ser472, Ser476, and Ser528 each carry phosphoserine. The span at 506–543 (FSMDNISDSGASNETPNALQENSLADFSLPQTPQTDNP) shows a compositional bias: polar residues. Disordered regions lie at residues 506-577 (FSMD…DPLE) and 595-688 (QVDK…RPEG). Thr537 is modified (phosphothreonine). The PKA-RII subunit binding domain stretch occupies residues 576–589 (LEYQAGLLVQNAIQ). Residues 595 to 608 (QVDKAEVHTSKEGS) are compositionally biased toward basic and acidic residues. A Phosphoserine modification is found at Ser641. A compositionally biased stretch (basic and acidic residues) spans 644-665 (QEKRDVLPKILPGEDKTLREKG). Residues 720-755 (KLRSRKQRTLSMIEEEIRAAQEREEELKRQRQVRQS) are a coiled coil. A phosphoserine mark is found at Ser730, Ser758, Ser789, and Ser796. The interval 740–814 (QEREEELKRQ…EAAGAQRPKN (75 aa)) is disordered. Residues 755-774 (STPSPRAQNAPSLPSRTTCY) show a composition bias toward polar residues.

Its subcellular location is the apical cell membrane. Binds to regulatory subunit (RII) of protein kinase A. May be involved in establishing polarity in signaling systems or in integrating PKA-RII isoforms with downstream effectors to capture, amplify and focus diffuse, trans-cellular signals carried by cAMP. Binds to and modulates the structure of the actin cytoskeleton. The sequence is that of A-kinase anchor protein 2 from Rattus norvegicus (Rat).